A 302-amino-acid chain; its full sequence is Nucleotide-binding protein Bcenmc03_2806 (302 aa).

8–15 (GISGSGKS) is an ATP binding site. 57–60 (DARS) provides a ligand contact to GTP.

Belongs to the RapZ-like family.

Functionally, displays ATPase and GTPase activities. This is Nucleotide-binding protein Bcenmc03_2806 from Burkholderia orbicola (strain MC0-3).